A 185-amino-acid polypeptide reads, in one-letter code: Inner membrane-spanning protein YciB (185 aa).

5 helical membrane-spanning segments follow: residues 19 to 39 (IHGI…LMAW), 49 to 69 (TMTW…LYFH), 72 to 92 (TFIK…LLFT), 122 to 142 (GYWI…AYAF), and 150 to 170 (FKLF…AVVI).

Belongs to the YciB family.

The protein resides in the cell inner membrane. Its function is as follows. Plays a role in cell envelope biogenesis, maintenance of cell envelope integrity and membrane homeostasis. The polypeptide is Inner membrane-spanning protein YciB (Acidithiobacillus ferrooxidans (strain ATCC 23270 / DSM 14882 / CIP 104768 / NCIMB 8455) (Ferrobacillus ferrooxidans (strain ATCC 23270))).